We begin with the raw amino-acid sequence, 109 residues long: NAD(P)H-quinone oxidoreductase subunit M (109 aa).

It belongs to the complex I NdhM subunit family. In terms of assembly, NDH-1 can be composed of about 15 different subunits; different subcomplexes with different compositions have been identified which probably have different functions.

It is found in the cellular thylakoid membrane. It catalyses the reaction a plastoquinone + NADH + (n+1) H(+)(in) = a plastoquinol + NAD(+) + n H(+)(out). The catalysed reaction is a plastoquinone + NADPH + (n+1) H(+)(in) = a plastoquinol + NADP(+) + n H(+)(out). Functionally, NDH-1 shuttles electrons from an unknown electron donor, via FMN and iron-sulfur (Fe-S) centers, to quinones in the respiratory and/or the photosynthetic chain. The immediate electron acceptor for the enzyme in this species is believed to be plastoquinone. Couples the redox reaction to proton translocation, and thus conserves the redox energy in a proton gradient. Cyanobacterial NDH-1 also plays a role in inorganic carbon-concentration. The sequence is that of NAD(P)H-quinone oxidoreductase subunit M from Microcystis aeruginosa (strain NIES-843 / IAM M-2473).